The sequence spans 280 residues: SPX domain-containing protein 2 (280 aa).

The SPX domain occupies 1-162 (MKFGKSLSSQ…GSMIRLPFVQ (162 aa)). Disordered regions lie at residues 191–244 (PTNE…KSTV) and 257–280 (GSSTVSVFSLPPLHGSNGQDEPGR).

In terms of assembly, interacts (via SPX domain) with PHR2 (via C-terminus). Interacts with RLI1 in the nucleus to prevents its positive regulation of leaf inclination during phosphate (Pi) starvation. In terms of tissue distribution, predominantly expressed in roots, leaves and seeds. Localized in leaves lamina joints.

It is found in the nucleus. Inhibits PHR2 DNA-binding activity via a phosphate (Pi)-dependent protein interaction. Together with SPX1, plays a negative role in the regulation of leaf inclination by preventing RLI1 transcription factor activity in Pi depleted conditions. The chain is SPX domain-containing protein 2 from Oryza sativa subsp. japonica (Rice).